A 1082-amino-acid chain; its full sequence is DNA-directed RNA polymerase subunit beta (1082 aa).

Belongs to the RNA polymerase beta chain family. In terms of assembly, in plastids the minimal PEP RNA polymerase catalytic core is composed of four subunits: alpha, beta, beta', and beta''. When a (nuclear-encoded) sigma factor is associated with the core the holoenzyme is formed, which can initiate transcription.

The protein localises to the plastid. The protein resides in the chloroplast. It catalyses the reaction RNA(n) + a ribonucleoside 5'-triphosphate = RNA(n+1) + diphosphate. Its function is as follows. DNA-dependent RNA polymerase catalyzes the transcription of DNA into RNA using the four ribonucleoside triphosphates as substrates. This is DNA-directed RNA polymerase subunit beta from Euglena gracilis.